A 466-amino-acid chain; its full sequence is GTPase Der (466 aa).

EngA-type G domains are found at residues 3–167 and 176–350; these read PTLV…PDEP and PKIA…GAAM. GTP contacts are provided by residues 9–16, 56–60, 119–122, 182–189, 229–233, and 294–297; these read GRSNVGKS, DTGGF, NKTE, GRPNVGKS, DTAGL, and NKWD. The KH-like domain occupies 351–435; sequence AHLPTPRLTR…PLRIEFRTGR (85 aa). Positions 433 to 466 are disordered; it reads TGRNPYAGKSPAPLTEAEAKRAHRRRRYGRKKYG. A compositionally biased stretch (basic residues) spans 453–466; the sequence is RAHRRRRYGRKKYG.

This sequence belongs to the TRAFAC class TrmE-Era-EngA-EngB-Septin-like GTPase superfamily. EngA (Der) GTPase family. As to quaternary structure, associates with the 50S ribosomal subunit.

Its function is as follows. GTPase that plays an essential role in the late steps of ribosome biogenesis. The polypeptide is GTPase Der (Nitrosospira multiformis (strain ATCC 25196 / NCIMB 11849 / C 71)).